A 199-amino-acid chain; its full sequence is 3-isopropylmalate dehydratase small subunit (199 aa).

Belongs to the LeuD family. LeuD type 1 subfamily. As to quaternary structure, heterodimer of LeuC and LeuD.

It catalyses the reaction (2R,3S)-3-isopropylmalate = (2S)-2-isopropylmalate. It participates in amino-acid biosynthesis; L-leucine biosynthesis; L-leucine from 3-methyl-2-oxobutanoate: step 2/4. Catalyzes the isomerization between 2-isopropylmalate and 3-isopropylmalate, via the formation of 2-isopropylmaleate. The chain is 3-isopropylmalate dehydratase small subunit from Aeromonas hydrophila subsp. hydrophila (strain ATCC 7966 / DSM 30187 / BCRC 13018 / CCUG 14551 / JCM 1027 / KCTC 2358 / NCIMB 9240 / NCTC 8049).